Consider the following 351-residue polypeptide: Fe(3+) ions import ATP-binding protein FbpC (351 aa).

In terms of domain architecture, ABC transporter spans 7 to 237 (VVLKNICKRF…PKSMFMANFM (231 aa)). 39-46 (GPSGCGKT) contacts ATP.

This sequence belongs to the ABC transporter superfamily. Fe(3+) ion importer (TC 3.A.1.10) family. In terms of assembly, the complex is composed of two ATP-binding proteins (FbpC), two transmembrane proteins (FbpB) and a solute-binding protein (FbpA).

It localises to the cell inner membrane. The catalysed reaction is Fe(3+)(out) + ATP + H2O = Fe(3+)(in) + ADP + phosphate + H(+). Part of the ABC transporter complex FbpABC involved in Fe(3+) ions import. Responsible for energy coupling to the transport system. The protein is Fe(3+) ions import ATP-binding protein FbpC of Vibrio cholerae serotype O1 (strain ATCC 39315 / El Tor Inaba N16961).